Consider the following 505-residue polypeptide: Putative thymidine phosphorylase (505 aa).

It belongs to the thymidine/pyrimidine-nucleoside phosphorylase family. Type 2 subfamily.

It catalyses the reaction thymidine + phosphate = 2-deoxy-alpha-D-ribose 1-phosphate + thymine. The sequence is that of Putative thymidine phosphorylase from Parvibaculum lavamentivorans (strain DS-1 / DSM 13023 / NCIMB 13966).